Reading from the N-terminus, the 203-residue chain is Imidazoleglycerol-phosphate dehydratase (203 aa).

This sequence belongs to the imidazoleglycerol-phosphate dehydratase family.

Its subcellular location is the cytoplasm. The enzyme catalyses D-erythro-1-(imidazol-4-yl)glycerol 3-phosphate = 3-(imidazol-4-yl)-2-oxopropyl phosphate + H2O. The protein operates within amino-acid biosynthesis; L-histidine biosynthesis; L-histidine from 5-phospho-alpha-D-ribose 1-diphosphate: step 6/9. The protein is Imidazoleglycerol-phosphate dehydratase of Helicobacter hepaticus (strain ATCC 51449 / 3B1).